The sequence spans 399 residues: Elongation factor Tu (399 aa).

The tr-type G domain maps to 10 to 209 (KPHVNIGTIG…EVDAYIPTPK (200 aa)). Residues 19–26 (GHVDHGKT) are G1. Residue 19–26 (GHVDHGKT) coordinates GTP. Residue threonine 26 participates in Mg(2+) binding. The segment at 60–64 (GITIA) is G2. The tract at residues 81–84 (DCPG) is G3. GTP contacts are provided by residues 81–85 (DCPGH) and 136–139 (NKQD). The G4 stretch occupies residues 136–139 (NKQD). A G5 region spans residues 174-176 (SAL).

Belongs to the TRAFAC class translation factor GTPase superfamily. Classic translation factor GTPase family. EF-Tu/EF-1A subfamily. In terms of assembly, monomer.

The protein resides in the cytoplasm. The catalysed reaction is GTP + H2O = GDP + phosphate + H(+). Functionally, GTP hydrolase that promotes the GTP-dependent binding of aminoacyl-tRNA to the A-site of ribosomes during protein biosynthesis. The chain is Elongation factor Tu from Helicobacter pylori (strain P12).